We begin with the raw amino-acid sequence, 1020 residues long: Vacuolar membrane protease (1020 aa).

At 1-11 the chain is on the cytoplasmic side; that stretch reads MKCHNPFGFRV. The helical transmembrane segment at 12-32 threads the bilayer; sequence GPVTFWTIIIYLALLVPLLWI. Residues 33–410 are Vacuolar-facing; the sequence is HETVPPAPSS…GFAVFGLRGL (378 aa). N-linked (GlcNAc...) asparagine glycosylation is found at N50, N94, and N130. Residues H191 and D203 each contribute to the Zn(2+) site. The active-site Proton acceptor is E237. Residues E238, E263, and H336 each contribute to the Zn(2+) site. Residues 411 to 431 form a helical membrane-spanning segment; the sequence is FAWSLTLLIVSPLILAILVFI. Topologically, residues 432 to 467 are cytoplasmic; it reads LNRHDKLYFFSRKINVHNEGSEDPVSIGGFRGFTRF. The chain crosses the membrane as a helical span at residues 468 to 488; sequence PIAVGFSGALTLASAFLLTKI. Over 489–491 the chain is Vacuolar; the sequence is NPM. Residues 492–512 traverse the membrane as a helical segment; sequence IVYSSEYAVWGMMLSLFYVSL. At 513-529 the chain is on the cytoplasmic side; the sequence is WMTLKGSSAVRPSALQR. A helical membrane pass occupies residues 530 to 550; sequence GYIHIWLFIVSWGLLIVVAVT. Over 551 to 561 the chain is Vacuolar; sequence EDRLKIASGYP. Residues 562–582 form a helical membrane-spanning segment; sequence VVFLHSALFLSTVISFLELFG. Topologically, residues 583-690 are cytoplasmic; sequence LTKKHDYARR…RLPGWTWILQ (108 aa). The segment at 609 to 648 is disordered; it reads DDALIAPDTPNDEAEDSDGEDSEHEPTETTPLRAGGDSRV. Over residues 618-631 the composition is skewed to acidic residues; the sequence is PNDEAEDSDGEDSE. A helical transmembrane segment spans residues 691–711; that stretch reads FLLLAPINVILWGQIGLFAVA. Residues 712–724 are Vacuolar-facing; the sequence is ATQAGGADGGSVL. Residues 725-745 traverse the membrane as a helical segment; that stretch reads TTYLIIAVLSIVILVPLAPFI. Over 746 to 750 the chain is Cytoplasmic; it reads HRVHY. The helical transmembrane segment at 751-771 threads the bilayer; sequence YVPIILFAAFAGTLIYNLIAF. At 772 to 1020 the chain is on the vacuolar side; it reads PFSANNRYKI…VGLVRPVKRF (249 aa). 3 N-linked (GlcNAc...) asparagine glycosylation sites follow: N851, N868, and N873.

Belongs to the peptidase M28 family. Zn(2+) is required as a cofactor.

The protein localises to the vacuole membrane. In terms of biological role, may be involved in vacuolar sorting and osmoregulation. The chain is Vacuolar membrane protease from Verticillium alfalfae (strain VaMs.102 / ATCC MYA-4576 / FGSC 10136) (Verticillium wilt of alfalfa).